Here is a 297-residue protein sequence, read N- to C-terminus: Probable DNA polymerase III subunit delta (297 aa).

Belongs to the DNA polymerase HolA subunit family. As to quaternary structure, component of the DNA clamp loading complex consisting of tau(3):delta(1):delta'(1). The DNA polymerase III holoenzyme complex contains at least 10 different subunits organized into 3 functionally essential subassemblies: the Pol III core, the beta sliding clamp processivity factor and the clamp-loading complex. The Pol III core (subunits alpha, epsilon and theta) contains the polymerase and the 3'-5' exonuclease proofreading activities. The polymerase is tethered to the template via the dimeric beta sliding clamp processivity factor. The DNA clamp-loading complex assembles the beta sliding clamp onto the primed template and plays a central role in the organization and communication at the replication fork.

The enzyme catalyses DNA(n) + a 2'-deoxyribonucleoside 5'-triphosphate = DNA(n+1) + diphosphate. Functionally, part of the beta sliding clamp loading complex, which hydrolyzes ATP to load the beta clamp onto primed DNA to form the DNA replication pre-initiation complex. DNA polymerase III is a complex, multichain enzyme responsible for most of the replicative synthesis in bacteria. This DNA polymerase also exhibits 3'-5' exonuclease activity. The delta subunit is the wrench that will open the beta subunit dimer. The DNA clamp loading complex (tau(3),delta,delta') is thought to load beta dimers onto DNA by binding ATP which alters the complex's conformation so it can bind beta sliding clamp dimers and open them at one interface. Primed DNA is recognized, ATP is hydrolyzed releasing the clamp loading complex and closing the beta sliding clamp ring around the primed DNA. This is Probable DNA polymerase III subunit delta from Mycoplasma genitalium (strain ATCC 33530 / DSM 19775 / NCTC 10195 / G37) (Mycoplasmoides genitalium).